The chain runs to 831 residues: Translation initiation factor IF-2 (831 aa).

The region spanning 329–499 is the tr-type G domain; the sequence is TRAPVVTVMG…LLIAEMQDLK (171 aa). The segment at 338 to 345 is G1; the sequence is GHVDHGKT. 338-345 provides a ligand contact to GTP; sequence GHVDHGKT. The interval 363–367 is G2; sequence GITQH. The tract at residues 385 to 388 is G3; sequence DTPG. GTP is bound by residues 385–389 and 439–442; these read DTPGH and NKID. The tract at residues 439-442 is G4; the sequence is NKID. The tract at residues 475 to 477 is G5; that stretch reads SAL.

It belongs to the TRAFAC class translation factor GTPase superfamily. Classic translation factor GTPase family. IF-2 subfamily.

The protein resides in the cytoplasm. Its function is as follows. One of the essential components for the initiation of protein synthesis. Protects formylmethionyl-tRNA from spontaneous hydrolysis and promotes its binding to the 30S ribosomal subunits. Also involved in the hydrolysis of GTP during the formation of the 70S ribosomal complex. This chain is Translation initiation factor IF-2, found in Rickettsia rickettsii (strain Iowa).